A 202-amino-acid polypeptide reads, in one-letter code: GTP cyclohydrolase 1 (202 aa).

C90, H93, and C163 together coordinate Zn(2+).

This sequence belongs to the GTP cyclohydrolase I family. Homomer.

The enzyme catalyses GTP + H2O = 7,8-dihydroneopterin 3'-triphosphate + formate + H(+). It functions in the pathway cofactor biosynthesis; 7,8-dihydroneopterin triphosphate biosynthesis; 7,8-dihydroneopterin triphosphate from GTP: step 1/1. This chain is GTP cyclohydrolase 1, found in Mycobacterium ulcerans (strain Agy99).